We begin with the raw amino-acid sequence, 251 residues long: Cell division protein ZapD (251 aa).

This sequence belongs to the ZapD family. In terms of assembly, interacts with FtsZ.

The protein resides in the cytoplasm. In terms of biological role, cell division factor that enhances FtsZ-ring assembly. Directly interacts with FtsZ and promotes bundling of FtsZ protofilaments, with a reduction in FtsZ GTPase activity. This chain is Cell division protein ZapD, found in Burkholderia multivorans (strain ATCC 17616 / 249).